A 156-amino-acid polypeptide reads, in one-letter code: Small ribosomal subunit protein uS7c (156 aa).

It belongs to the universal ribosomal protein uS7 family. Part of the 30S ribosomal subunit.

Its subcellular location is the plastid. It is found in the chloroplast. Its function is as follows. One of the primary rRNA binding proteins, it binds directly to 16S rRNA where it nucleates assembly of the head domain of the 30S subunit. This is Small ribosomal subunit protein uS7c (rps7) from Thalassiosira pseudonana (Marine diatom).